Consider the following 242-residue polypeptide: MATLCLFDMDGTLTAPRQKITEEMDGFLQKLRQKTKIGVVGGSDFEKLQEQLGNDVVEKYDYVFPENGLVAYKDGKLLCKQNIQGHLGEDVIQDLINYCLSYIANIKLPKKRGTFIEFRNGMLNVSPIGRSCSQEERIEFYELDKKEHIRQKFVADLRKEFAGKGLTFSIGGQISIDVFPEGWDKRYCLRHLEHAGYKTIYFFGDKTMPGGNDHEIFTDPRTVGYTVTAPEDTRRICEGLFP.

Asp8 acts as the Nucleophile in catalysis. The Mg(2+) site is built by Asp8 and Asp10. The Proton donor/acceptor role is filled by Asp10. Alpha-D-mannose 1-phosphate is bound by residues Arg17, Arg119, Arg130, and Arg137. Position 145 is an N6-acetyllysine (Lys145). Alpha-D-mannose 1-phosphate contacts are provided by Ser175 and Asp177. The Mg(2+) site is built by Asp205, Phe217, Asp219, and Thr222.

It belongs to the eukaryotic PMM family. As to quaternary structure, homodimer.

It is found in the cytoplasm. The catalysed reaction is alpha-D-mannose 1-phosphate = D-mannose 6-phosphate. It participates in nucleotide-sugar biosynthesis; GDP-alpha-D-mannose biosynthesis; alpha-D-mannose 1-phosphate from D-fructose 6-phosphate: step 2/2. Involved in the synthesis of the GDP-mannose and dolichol-phosphate-mannose required for a number of critical mannosyl transfer reactions. The sequence is that of Phosphomannomutase 2 (Pmm2) from Mus musculus (Mouse).